The following is a 64-amino-acid chain: Disintegrin schistatin (64 aa).

The region spanning 1-64 (NSVHPCCDPV…PDCPRNRYNV (64 aa)) is the Disintegrin domain. 4 cysteine pairs are disulfide-bonded: Cys-6/Cys-29, Cys-20/Cys-26, Cys-25/Cys-50, and Cys-38/Cys-57. The short motif at 42-44 (RGD) is the Cell attachment site element.

Belongs to the disintegrin family. Dimeric disintegrin subfamily. As to quaternary structure, homodimer; disulfide-linked. As to expression, expressed by the venom gland.

Its subcellular location is the secreted. Its function is as follows. May bind to both alpha-IIb/beta-3 (ITGA2B/ITGB3) and alpha-V/beta-3 (ITGAV/ITGB3) integrins, and may inhibit platelet aggregation. The sequence is that of Disintegrin schistatin from Echis carinatus (Saw-scaled viper).